Consider the following 253-residue polypeptide: NAD(P)H-quinone oxidoreductase subunit K (253 aa).

Residues Cys-68, Cys-69, Cys-133, and Cys-164 each coordinate [4Fe-4S] cluster.

It belongs to the complex I 20 kDa subunit family. In terms of assembly, NDH-1 can be composed of about 15 different subunits; different subcomplexes with different compositions have been identified which probably have different functions. Requires [4Fe-4S] cluster as cofactor.

It is found in the cellular thylakoid membrane. It carries out the reaction a plastoquinone + NADH + (n+1) H(+)(in) = a plastoquinol + NAD(+) + n H(+)(out). It catalyses the reaction a plastoquinone + NADPH + (n+1) H(+)(in) = a plastoquinol + NADP(+) + n H(+)(out). NDH-1 shuttles electrons from an unknown electron donor, via FMN and iron-sulfur (Fe-S) centers, to quinones in the respiratory and/or the photosynthetic chain. The immediate electron acceptor for the enzyme in this species is believed to be plastoquinone. Couples the redox reaction to proton translocation, and thus conserves the redox energy in a proton gradient. Cyanobacterial NDH-1 also plays a role in inorganic carbon-concentration. The polypeptide is NAD(P)H-quinone oxidoreductase subunit K (Synechococcus sp. (strain CC9311)).